Reading from the N-terminus, the 85-residue chain is Small ribosomal subunit protein bS16 (85 aa).

This sequence belongs to the bacterial ribosomal protein bS16 family.

This chain is Small ribosomal subunit protein bS16, found in Acinetobacter baylyi (strain ATCC 33305 / BD413 / ADP1).